The primary structure comprises 206 residues: Halorhodopsin (206 aa).

The chain crosses the membrane as a helical span at residues 1-15 (IALAGLSILLFVYMG). At 16 to 21 (RNVEDP) the chain is on the cytoplasmic side. Residues 22-45 (RAQLIFVATLMVPLVSISSYTGLV) traverse the membrane as a helical segment. Residues 46 to 75 (SGLTVGFLEMPAGHALAGMGAGPEGGVFTP) lie on the Extracellular side of the membrane. The chain crosses the membrane as a helical span at residues 76 to 97 (WGRYLTWAFSTPMILIALGLLA). At 98-100 (GSN) the chain is on the cytoplasmic side. A helical transmembrane segment spans residues 101–124 (MSKLFTAVVADVGMCITGLAAALT). The Extracellular portion of the chain corresponds to 125–127 (TSS). Residues 128 to 150 (YLLRWVWYGISCAFFVVVLYILL) traverse the membrane as a helical segment. The Cytoplasmic segment spans residues 151 to 162 (AEWAKDAEVAGT). The chain crosses the membrane as a helical span at residues 163–186 (ADIFNTLKVLTVVLWLGYPIFWAL). Topologically, residues 187–195 (GAEGLAVLD) are extracellular. Residues 196-206 (IAITSWAYSGM) traverse the membrane as a helical segment.

It belongs to the archaeal/bacterial/fungal opsin family.

The protein localises to the cell membrane. In terms of biological role, light-driven chloride pump. This is Halorhodopsin (hop) from Halobacterium halobium (strain mex).